Here is a 322-residue protein sequence, read N- to C-terminus: Phosphatidylserine decarboxylase proenzyme (322 aa).

Active-site charge relay system; for autoendoproteolytic cleavage activity residues include aspartate 90, histidine 147, and serine 254. Residue serine 254 is the Schiff-base intermediate with substrate; via pyruvic acid; for decarboxylase activity of the active site. Serine 254 carries the pyruvic acid (Ser); by autocatalysis modification.

It belongs to the phosphatidylserine decarboxylase family. PSD-B subfamily. Prokaryotic type I sub-subfamily. In terms of assembly, heterodimer of a large membrane-associated beta subunit and a small pyruvoyl-containing alpha subunit. The cofactor is pyruvate. In terms of processing, is synthesized initially as an inactive proenzyme. Formation of the active enzyme involves a self-maturation process in which the active site pyruvoyl group is generated from an internal serine residue via an autocatalytic post-translational modification. Two non-identical subunits are generated from the proenzyme in this reaction, and the pyruvate is formed at the N-terminus of the alpha chain, which is derived from the carboxyl end of the proenzyme. The autoendoproteolytic cleavage occurs by a canonical serine protease mechanism, in which the side chain hydroxyl group of the serine supplies its oxygen atom to form the C-terminus of the beta chain, while the remainder of the serine residue undergoes an oxidative deamination to produce ammonia and the pyruvoyl prosthetic group on the alpha chain. During this reaction, the Ser that is part of the protease active site of the proenzyme becomes the pyruvoyl prosthetic group, which constitutes an essential element of the active site of the mature decarboxylase.

The protein resides in the cell membrane. The catalysed reaction is a 1,2-diacyl-sn-glycero-3-phospho-L-serine + H(+) = a 1,2-diacyl-sn-glycero-3-phosphoethanolamine + CO2. It functions in the pathway phospholipid metabolism; phosphatidylethanolamine biosynthesis; phosphatidylethanolamine from CDP-diacylglycerol: step 2/2. Catalyzes the formation of phosphatidylethanolamine (PtdEtn) from phosphatidylserine (PtdSer). The chain is Phosphatidylserine decarboxylase proenzyme from Shigella dysenteriae serotype 1 (strain Sd197).